Consider the following 690-residue polypeptide: MVLTDEQRQAIAKKREEAIRRAAAYREREMQAAANATASTSSAAPPAPPKPVIPVMFSQNRQNFQPMKPTMNNSTKQSTINNYIKQVQKPEPTSLIKPTIGVKLKLDIGDRIKIEFYPFHSAVIDLIKQVPSRNYDPAKRSWTVASSDHITISNILKNATAVKVELEPLPQNIIGLTNFKPKAAPSDLNTVMDPSLIERLFPYQKEGVIFALERDGRILLADEMGLGKSVQALTIARYYKADWPLLIVCPASVKGAWKKQLNTFFPIIHRIFIVDKSSDPLPDVCTSNTVAIMSYEQMVLKHDILKKEKYRTIIFDESHMLKDGKARRTKVATDLSKVALHVILLSGTPALSRPSELFTQIRLIDHKLFTNFHEFAIRYCDGKQGRFCFEAKGCTNSEELAAIMFKRLMIRRLKADVLKDLPEKRREVVYVSGPTIDARMDDLQKARADYEKVNSMERKHESLLEFYSLTGIVKAAAVCEHILENYFYPDAPPRKVLIFAHHQIVLDTIQVEVNKRKLGSIRIDGKTPSHRRTALCDSFQTDDNIRVAVLSITAAGVGITLTAASVVVFAEIHFNPGYLVQAEDRAHRVGQKDSVFVQYLIAKKTADDVMWNMVQQKLDVLGQVSLSSDTFRTADKMHLRFNDAAQPGIAEYLKKTPDTTIDEWEDPVEEKEDDDLEIICDSPAPKRIKN.

Positions 30–49 (MQAAANATASTSSAAPPAPP) are disordered. The segment covering 31–44 (QAAANATASTSSAA) has biased composition (low complexity). The HARP domain maps to 92–170 (PTSLIKPTIG…AVKVELEPLP (79 aa)). The Helicase ATP-binding domain maps to 209–367 (IFALERDGRI…FTQIRLIDHK (159 aa)). ATP is bound at residue 222-229 (DEMGLGKS). Positions 316-319 (DESH) match the DESH box motif. The Nuclear localization signal signature appears at 411–428 (RRLKADVLKDLPEKRREV). The region spanning 482–639 (ILENYFYPDA…TFRTADKMHL (158 aa)) is the Helicase C-terminal domain.

Belongs to the SNF2/RAD54 helicase family. SMARCAL1 subfamily.

The protein resides in the nucleus. It catalyses the reaction ATP + H2O = ADP + phosphate + H(+). Functionally, ATP-dependent annealing helicase that catalyzes the rewinding of the stably unwound DNA. The sequence is that of SWI/SNF-related matrix-associated actin-dependent regulator of chromatin subfamily A-like protein 1 homolog from Caenorhabditis elegans.